Consider the following 1180-residue polypeptide: Lon protease homolog 2, peroxisomal (1180 aa).

In terms of domain architecture, Lon N-terminal spans Leu-19 to Ile-366. Positions Pro-416–Glu-465 are disordered. A compositionally biased stretch (low complexity) spans Asn-422–Ser-444. A compositionally biased stretch (acidic residues) spans Asp-452–Glu-465. An ATP-binding site is contributed by Gly-667–Thr-674. In terms of domain architecture, Lon proteolytic spans Asn-924–Glu-1163. Active-site residues include Ser-1032 and Lys-1075.

The protein belongs to the peptidase S16 family.

Its subcellular location is the peroxisome matrix. It catalyses the reaction Hydrolysis of proteins in presence of ATP.. Functionally, ATP-dependent serine protease that mediates the selective degradation of misfolded and unassembled polypeptides in the peroxisomal matrix. Necessary for type 2 peroxisome targeting signal (PTS2)-containing protein processing and facilitates peroxisome matrix protein import. The polypeptide is Lon protease homolog 2, peroxisomal (Scheffersomyces stipitis (strain ATCC 58785 / CBS 6054 / NBRC 10063 / NRRL Y-11545) (Yeast)).